The sequence spans 879 residues: MERMGLNEIREEYLKFFESKAHLRLPSFSLVPKNDKSLLLINAGMAPLKPYFTGLQVPPNKRVTTCQKCVRTGDIENVGKTSRHGTFFEMMGNFSFGDYFKEEVIPWAWEFTTEVLKLPKNKLYVTIYEDDDEALDIWVNKTDMDPKRIFRLGKEDNFWEHGLGPCGPCSEIHFDRGAGEVKTSEEFVKASDEDKIVEFWNLVFTQFDKDEEGNYNKLANPNIDTGMGLERMATIMQNVDTIFEVDTIKAVLDKVCKLSGANYKEDRVKDISIRIITDHIRSITFMISDGILPSNEGRGYVLRRLLRRAARHGKTLGINNTFLHNLTDIVIENCYKNYPELEEKREYIKKIIKLEEERFDETIDAGMQILNDYIKEVKNNNYKILSGDKAFKLYDTYGFPVELTEEILEEEGISIDKEGFNKEMKEQRERARSAREETNYMGAEDTILNKIDLNINTDFEGYDKLEVKSKVAVIIKDEEFKNEMEKGNEGVIVTYNTPFYAEMGGQIGDTGIIYNDNFKAEVIDCKKNISGKILHFVKILDGKVALEDQVILKVNEERRNNIRKNHTATHILHAALIKVVGDHVQQSGSYVDDERLRFDFSHFEAVSEDELKEVEKIVNKEIMKANAVNTKVMNIEEAKQQGAIALFDNKYKDDVRVVSVGDFSKELCGGTHVSNSGQIGIFKIVSEAGVAAGIRRIEAVTAFKAMEYVDHKNNILKEAAQILKCNEKELLNKLNHQVLEMKEKEKEIEALKLKLASGAEDEILDNIKEIKGVKVASAAVKDIDGNALRDLGDKIRDNMQSGVVVLGSNYKGKVLFVAMATKDTVAKGVHCGKIIKEVATIAGGGGGGRPDMAQAGGKDPNKLEDAIKTVETVVESLVK.

Zn(2+)-binding residues include His-566, His-570, Cys-668, and His-672.

It belongs to the class-II aminoacyl-tRNA synthetase family. Requires Zn(2+) as cofactor.

It is found in the cytoplasm. The catalysed reaction is tRNA(Ala) + L-alanine + ATP = L-alanyl-tRNA(Ala) + AMP + diphosphate. Functionally, catalyzes the attachment of alanine to tRNA(Ala) in a two-step reaction: alanine is first activated by ATP to form Ala-AMP and then transferred to the acceptor end of tRNA(Ala). Also edits incorrectly charged Ser-tRNA(Ala) and Gly-tRNA(Ala) via its editing domain. The protein is Alanine--tRNA ligase of Clostridium botulinum (strain Hall / ATCC 3502 / NCTC 13319 / Type A).